We begin with the raw amino-acid sequence, 346 residues long: Methylthioribose-1-phosphate isomerase (346 aa).

Substrate contacts are provided by residues 48–50 (RGA), arginine 91, and glutamine 196. The active-site Proton donor is the aspartate 237. Residue 247–248 (NK) coordinates substrate.

It belongs to the eIF-2B alpha/beta/delta subunits family. MtnA subfamily.

It catalyses the reaction 5-(methylsulfanyl)-alpha-D-ribose 1-phosphate = 5-(methylsulfanyl)-D-ribulose 1-phosphate. The protein operates within amino-acid biosynthesis; L-methionine biosynthesis via salvage pathway; L-methionine from S-methyl-5-thio-alpha-D-ribose 1-phosphate: step 1/6. Its function is as follows. Catalyzes the interconversion of methylthioribose-1-phosphate (MTR-1-P) into methylthioribulose-1-phosphate (MTRu-1-P). The sequence is that of Methylthioribose-1-phosphate isomerase from Thermosipho melanesiensis (strain DSM 12029 / CIP 104789 / BI429).